Here is a 383-residue protein sequence, read N- to C-terminus: MTESPKRIVVGLSGGVDSAVAALRLVRAGHEVIGLFMKNWEDDDTLTQCSAEDDIAAAVAVAEHLGIPIRRVNFAAHYRREVFEHALQELRAGRTPNPDILCNRHVKFDRFLRHAREQFEADAVATGHYARTGRAGDGEPALLRGIDPSKDQSYFLAGVPRQALDAVRFPLGDSTKETVRAEARSAALPNFDRPDSTGICFIGERDFTQFMQRYIDPHPGPILTEDGREIGRHCGLAFYTLGQRRGLGIGGDRNRDSSAPWYVAGKDARRNALFVVQGHDHPWLQSAAVSTEPFHWLAPVPAEGARLHAQVRYRQEPQAGQLSHAEGGRVVFRFDEPQRAATPGQHLVLYDREQCLGGGVIDTAHPADRSAPPALQTQSTEVV.

Residues 11–18 (GLSGGVDS) and Met37 contribute to the ATP site. Positions 97 to 99 (NPD) are interaction with target base in tRNA. Residue Cys102 is the Nucleophile of the active site. A disulfide bond links Cys102 and Cys200. ATP is bound at residue Gly127. Residues 150–152 (KDQ) form an interaction with tRNA region. Cys200 (cysteine persulfide intermediate) is an active-site residue. The tract at residues 312–313 (RY) is interaction with tRNA. A disordered region spans residues 361-383 (IDTAHPADRSAPPALQTQSTEVV).

This sequence belongs to the MnmA/TRMU family.

The protein localises to the cytoplasm. The enzyme catalyses S-sulfanyl-L-cysteinyl-[protein] + uridine(34) in tRNA + AH2 + ATP = 2-thiouridine(34) in tRNA + L-cysteinyl-[protein] + A + AMP + diphosphate + H(+). Its function is as follows. Catalyzes the 2-thiolation of uridine at the wobble position (U34) of tRNA, leading to the formation of s(2)U34. The polypeptide is tRNA-specific 2-thiouridylase MnmA (Halorhodospira halophila (strain DSM 244 / SL1) (Ectothiorhodospira halophila (strain DSM 244 / SL1))).